Reading from the N-terminus, the 549-residue chain is Glucose-6-phosphate isomerase (549 aa).

Catalysis depends on glutamate 355, which acts as the Proton donor. Active-site residues include histidine 387 and lysine 515.

The protein belongs to the GPI family.

Its subcellular location is the cytoplasm. It carries out the reaction alpha-D-glucose 6-phosphate = beta-D-fructose 6-phosphate. It functions in the pathway carbohydrate biosynthesis; gluconeogenesis. It participates in carbohydrate degradation; glycolysis; D-glyceraldehyde 3-phosphate and glycerone phosphate from D-glucose: step 2/4. Its function is as follows. Catalyzes the reversible isomerization of glucose-6-phosphate to fructose-6-phosphate. The polypeptide is Glucose-6-phosphate isomerase (Haemophilus influenzae (strain PittGG)).